Reading from the N-terminus, the 150-residue chain is Endoribonuclease YbeY (150 aa).

Zn(2+) is bound by residues histidine 112, histidine 116, and aspartate 122.

This sequence belongs to the endoribonuclease YbeY family. Zn(2+) serves as cofactor.

The protein localises to the cytoplasm. Single strand-specific metallo-endoribonuclease involved in late-stage 70S ribosome quality control and in maturation of the 3' terminus of the 16S rRNA. The protein is Endoribonuclease YbeY of Protochlamydia amoebophila (strain UWE25).